A 269-amino-acid polypeptide reads, in one-letter code: Putative pyruvate, phosphate dikinase regulatory protein (269 aa).

151–158 (GVSRSSKT) is a binding site for ADP.

Belongs to the pyruvate, phosphate/water dikinase regulatory protein family. PDRP subfamily.

It carries out the reaction N(tele)-phospho-L-histidyl/L-threonyl-[pyruvate, phosphate dikinase] + ADP = N(tele)-phospho-L-histidyl/O-phospho-L-threonyl-[pyruvate, phosphate dikinase] + AMP + H(+). It catalyses the reaction N(tele)-phospho-L-histidyl/O-phospho-L-threonyl-[pyruvate, phosphate dikinase] + phosphate + H(+) = N(tele)-phospho-L-histidyl/L-threonyl-[pyruvate, phosphate dikinase] + diphosphate. Its function is as follows. Bifunctional serine/threonine kinase and phosphorylase involved in the regulation of the pyruvate, phosphate dikinase (PPDK) by catalyzing its phosphorylation/dephosphorylation. This Geobacter metallireducens (strain ATCC 53774 / DSM 7210 / GS-15) protein is Putative pyruvate, phosphate dikinase regulatory protein.